A 914-amino-acid polypeptide reads, in one-letter code: Probable UDP-N-acetylglucosamine--peptide N-acetylglucosaminyltransferase SPINDLY (914 aa).

Positions 1 to 39 (MVGLEDDTERERSPVVENGFSNGSRSSSSSAGVLSPSRK) are disordered. A compositionally biased stretch (low complexity) spans 19 to 37 (GFSNGSRSSSSSAGVLSPS). Position 35 is a phosphoserine (Ser35). TPR repeat units follow at residues 43–76 (GNDT…DSKN), 77–110 (VEAH…DPHN), 112–144 (CALT…DASY), 152–185 (AIVL…DPHY), 186–219 (APAY…RPMY), 220–253 (AEAY…SPNF), 261–294 (AIAL…NWHY), 295–328 (ADAM…NPHC), 329–362 (AEAC…KPNF), 364–396 (QSLN…NPTY), and 397–430 (AEAF…DPDS). The tract at residues 431 to 914 (RNAGQNRLLA…QLSKRMDSTS (484 aa)) is catalytic region. Positions 866–914 (PLISKDLGPSRVSVTGEATPSLKANGSAPVPSSLPTQSPQLSKRMDSTS) are disordered. The segment covering 877–889 (VSVTGEATPSLKA) has biased composition (polar residues). Residues 894–907 (PVPSSLPTQSPQLS) are compositionally biased toward low complexity.

It belongs to the glycosyltransferase 41 family. O-GlcNAc transferase subfamily. In terms of assembly, homomultimer; via its TPR repeats. Interacts with GI. Interacts with TCP14 and TCP15. Interacts (via N-terminus) with APRR5. Interacts with CPN20. In terms of tissue distribution, widely expressed. Present throughout the plant (at protein level).

Its subcellular location is the cytoplasm. It is found in the nucleus. It carries out the reaction L-seryl-[protein] + UDP-N-acetyl-alpha-D-glucosamine = 3-O-(N-acetyl-beta-D-glucosaminyl)-L-seryl-[protein] + UDP + H(+). It catalyses the reaction L-threonyl-[protein] + UDP-N-acetyl-alpha-D-glucosamine = 3-O-(N-acetyl-beta-D-glucosaminyl)-L-threonyl-[protein] + UDP + H(+). The enzyme catalyses L-seryl-[protein] + GDP-beta-L-fucose = 3-O-(alpha-L-fucosyl)-L-seryl-[protein] + GDP + H(+). The catalysed reaction is L-threonyl-[protein] + GDP-beta-L-fucose = 3-O-(alpha-L-fucosyl)-L-threonyl-[protein] + GDP + H(+). It functions in the pathway protein modification; protein glycosylation. Functionally, probable O-linked N-acetylglucosamine transferase (OGT) involved in various processes such as gibberellin (GA) signaling pathway and circadian clock. OGTs catalyze the addition of nucleotide-activated sugars directly onto the polypeptide through O-glycosidic linkage with the hydroxyl of serine or threonine. Probably acts by adding O-linked sugars to yet unknown proteins. Acts as a repressor of GA signaling pathway to inhibit hypocotyl elongation. Functions with GIGANTEA (GI) in pathways controlling flowering, circadian cotyledon movements and hypocotyl elongation. Acts as a light-regulated promoter of elongation via its interaction with GI. Acts as an activator of cytokinin signaling. Required with SEC for gamete and seed development. Its OGT activity has been proved in vitro but not in vivo. Possesses O-fucosyltransferase activity on specific serine and threonine residues. Mediates O-fucosylation of the DELLA protein RGA, a repressor of the GA signaling pathway. O-fucosylation enhances RGA activity by promoting RGA binding to key transcription factors in brassinosteroid and light-signaling pathways. Regulates root hair patterning upstream of the transcription factor WER, independently of DELLA proteins and GA signaling. Involved in abscisic acid (ABA) signaling partly through functional ABAR. Mediates O-fucosylation of CPN20 that may depress ABA responses during seed germination and seedling development. Involved in the modulation of the pace of the circadian clock by mediating O-fucosylation of APRR5, one of the core circadian clock components. O-fucosylation promotes APRR5 proteolysis. The sequence is that of Probable UDP-N-acetylglucosamine--peptide N-acetylglucosaminyltransferase SPINDLY from Arabidopsis thaliana (Mouse-ear cress).